The chain runs to 267 residues: Dihydropteroate synthase (267 aa).

The Pterin-binding domain occupies M1–K251. N11 provides a ligand contact to Mg(2+). (7,8-dihydropterin-6-yl)methyl diphosphate is bound by residues T51, D84, N103, D167, K203, and R239 to H241.

The protein belongs to the DHPS family. In terms of assembly, homodimer. Requires Mg(2+) as cofactor.

It catalyses the reaction (7,8-dihydropterin-6-yl)methyl diphosphate + 4-aminobenzoate = 7,8-dihydropteroate + diphosphate. Its pathway is cofactor biosynthesis; tetrahydrofolate biosynthesis; 7,8-dihydrofolate from 2-amino-4-hydroxy-6-hydroxymethyl-7,8-dihydropteridine diphosphate and 4-aminobenzoate: step 1/2. Catalyzes the condensation of para-aminobenzoate (pABA) with 6-hydroxymethyl-7,8-dihydropterin diphosphate (DHPt-PP) to form 7,8-dihydropteroate (H2Pte), the immediate precursor of folate derivatives. The polypeptide is Dihydropteroate synthase (folP) (Staphylococcus aureus (strain MSSA476)).